Reading from the N-terminus, the 64-residue chain is Large ribosomal subunit protein bL35 (64 aa).

Residues 1-26 (MPKIKTHRGAAKRFKKTGTGKIKRSK) are compositionally biased toward basic residues. Residues 1–48 (MPKIKTHRGAAKRFKKTGTGKIKRSKAYASHLLGGKSPKRKRNLRKAG) form a disordered region.

It belongs to the bacterial ribosomal protein bL35 family.

This is Large ribosomal subunit protein bL35 from Syntrophomonas wolfei subsp. wolfei (strain DSM 2245B / Goettingen).